We begin with the raw amino-acid sequence, 547 residues long: Inositol 1,4,5-trisphosphate receptor-interacting protein (547 aa).

The signal sequence occupies residues 1–15 (MAMGLFRVCLVVVTA). The Extracellular segment spans residues 16-83 (IINHPLLFPR…EEGRQQNETR (68 aa)). 2 N-linked (GlcNAc...) asparagine glycosylation sites follow: Asn27 and Asn80. The stretch at 32-82 (ENEEEIIRKMQAHQEKLQLEQLRLEEEVARLAAEKEALEQVAEEGRQQNET) forms a coiled coil. Residues 84–100 (VAWDLWSTLCMILFLMI) traverse the membrane as a helical segment. Over 101–547 (EVWRQDHQEG…VPSDQPTPKS (447 aa)) the chain is Cytoplasmic. Residues 109-129 (EGPSPECLGGEEDELPGLGGA) form a disordered region. A Phosphoserine modification is found at Ser547.

The protein belongs to the ITPRIP family. As to quaternary structure, interacts with ITPR. As to expression, detected in brain where it is concentrated in cerebellar Purkinje cells (at protein level).

Its subcellular location is the cell membrane. It localises to the nucleus outer membrane. In terms of biological role, enhances Ca(2+)-mediated inhibition of inositol 1,4,5-triphosphate receptor (ITPR) Ca(2+) release. In Homo sapiens (Human), this protein is Inositol 1,4,5-trisphosphate receptor-interacting protein (ITPRIP).